The primary structure comprises 615 residues: MAALVTSQLATSGTVLSVTDRFRRPGFQGLRPRNPADAALGMRTVGASAAPKQSRKPHRFDRRCLSMVVRATGSGGMNLVFVGAEMAPWSKTGGLGDVLGGLPAAMAANGHRVMVISPRYDQYKDAWDTSVISEIKVVDRYERVRYFHCYKRGVDRVFVDHPCFLEKVRGKTKEKIYGPDAGTDYEDNQQRFSLLCQAALEVPRILDLNNNPHFSGPYAMLCRAVPRRAGEDVVFVCNDWHTGLLACYLKSNYQSNGIYRTAKVAFCIHNISYQGRFSFDDFAQLNLPDRFKSSFDFIDGYDKPVEGRKINWMKAGILQADKVLTVSPYYAEELISGEARGCELDNIMRLTGITGIVNGMDVSEWDPIKDKFLTVNYDVTTALEGKALNKEALQAEVGLPVDRKVPLVAFIGRLEEQKGPDVMIAAIPEIVKEEDVQIVLLGTGKKKFERLLKSVEEKFPTKVRAVVRFNAPLAHQMMAGADVLAVTSRFEPCGLIQLQGMRYGTPCACASTGGLVDTIVEGKTGFHMGRLSVDCNVVEPADVKKVVTTLKRAVKVVGTPAYHEMVKNCMIQDLSWKGPAKNWEDVLLELGVEGSEPGIVGEEIAPLALENVAAP.

Residues 1-70 (MAALVTSQLA…DRRCLSMVVR (70 aa)) constitute a chloroplast transit peptide. Lys91 contributes to the ADP-alpha-D-glucose binding site.

This sequence belongs to the glycosyltransferase 1 family. Bacterial/plant glycogen synthase subfamily. Found in seeds and pollen.

The protein resides in the plastid. Its subcellular location is the chloroplast. It is found in the amyloplast. It carries out the reaction an NDP-alpha-D-glucose + [(1-&gt;4)-alpha-D-glucosyl](n) = [(1-&gt;4)-alpha-D-glucosyl](n+1) + a ribonucleoside 5'-diphosphate + H(+). It functions in the pathway glycan biosynthesis; starch biosynthesis. The polypeptide is Granule-bound starch synthase 1, chloroplastic/amyloplastic (WAXY) (Triticum aestivum (Wheat)).